We begin with the raw amino-acid sequence, 217 residues long: 3,4-dihydroxy-2-butanone 4-phosphate synthase (217 aa).

D-ribulose 5-phosphate-binding positions include 37–38 (RE), D42, 150–154 (RRGHT), and E174. Position 38 (E38) interacts with Mg(2+). H153 provides a ligand contact to Mg(2+).

The protein belongs to the DHBP synthase family. In terms of assembly, homodimer. Requires Mg(2+) as cofactor. Mn(2+) serves as cofactor.

It catalyses the reaction D-ribulose 5-phosphate = (2S)-2-hydroxy-3-oxobutyl phosphate + formate + H(+). It participates in cofactor biosynthesis; riboflavin biosynthesis; 2-hydroxy-3-oxobutyl phosphate from D-ribulose 5-phosphate: step 1/1. Functionally, catalyzes the conversion of D-ribulose 5-phosphate to formate and 3,4-dihydroxy-2-butanone 4-phosphate. This Yersinia pseudotuberculosis serotype O:1b (strain IP 31758) protein is 3,4-dihydroxy-2-butanone 4-phosphate synthase.